The chain runs to 460 residues: tRNA-splicing endonuclease subunit Sen2 (460 aa).

The disordered stretch occupies residues 143-215 (EKEETPQHEP…SPSSHNGHVA (73 aa)). Over residues 159–170 (SSLEGRVEKDEL) the composition is skewed to basic and acidic residues. Residues tyrosine 364 and histidine 372 contribute to the active site. Residues serine 403, serine 406, and serine 410 each carry the phosphoserine modification. Lysine 411 is a catalytic residue.

The protein belongs to the tRNA-intron endonuclease family. As to quaternary structure, tRNA splicing endonuclease is a heterotetramer composed of TSEN2, TSEN15, TSEN34/LENG5 and TSEN54. tRNA splicing endonuclease complex also contains proteins of the pre-mRNA 3'-end processing machinery such as CLP1, CPSF1, CPSF4 and CSTF2.

The protein localises to the nucleus. The protein resides in the nucleolus. The catalysed reaction is pretRNA = a 3'-half-tRNA molecule with a 5'-OH end + a 5'-half-tRNA molecule with a 2',3'-cyclic phosphate end + an intron with a 2',3'-cyclic phosphate and a 5'-hydroxyl terminus.. Its function is as follows. Constitutes one of the two catalytic subunit of the tRNA-splicing endonuclease complex, a complex responsible for identification and cleavage of the splice sites in pre-tRNA. It cleaves pre-tRNA at the 5'- and 3'-splice sites to release the intron. The products are an intron and two tRNA half-molecules bearing 2',3'-cyclic phosphate and 5'-OH termini. There are no conserved sequences at the splice sites, but the intron is invariably located at the same site in the gene, placing the splice sites an invariant distance from the constant structural features of the tRNA body. Probably carries the active site for 5'-splice site cleavage. The tRNA splicing endonuclease is also involved in mRNA processing via its association with pre-mRNA 3'-end processing factors, establishing a link between pre-tRNA splicing and pre-mRNA 3'-end formation, suggesting that the endonuclease subunits function in multiple RNA-processing events. In Mus musculus (Mouse), this protein is tRNA-splicing endonuclease subunit Sen2 (Tsen2).